A 429-amino-acid chain; its full sequence is Trigger factor (429 aa).

One can recognise a PPIase FKBP-type domain in the interval 164–249 (GDWAVIDHEG…LKALKVRQAP (86 aa)).

The protein belongs to the FKBP-type PPIase family. Tig subfamily.

The protein resides in the cytoplasm. It catalyses the reaction [protein]-peptidylproline (omega=180) = [protein]-peptidylproline (omega=0). Its function is as follows. Involved in protein export. Acts as a chaperone by maintaining the newly synthesized protein in an open conformation. Functions as a peptidyl-prolyl cis-trans isomerase. The protein is Trigger factor of Anaeromyxobacter dehalogenans (strain 2CP-C).